A 445-amino-acid polypeptide reads, in one-letter code: MSTMTDIGASGALHRTRSKPWYKVLYVQVLIAIVLGVLLGWVSPHLATNPWIKALGDGFVKLIKMVIAPIIFCTVVSGIAHIQDARKVGRVGVKALLYFEVVSSFALILGLIVGNLVPVGHGLAAKPDAGAVAKYVDQASHMSSVDFFLNIIPESVVGAFAKGDILQVLLFAILFGFALMALGERGHRLRDVIDDTAHAVFGVIAIVMKAAPVGAFGAMAFTIGKYGPAALGNLIGLVALFYATAALFVFVVLGLIAKFVGFNIFRFVGYIKDELLIVLGTSSSESALPQLMEKLERLGCSKSVVGLVVPTGYSFNLDGTNIYMTLATLFIAQALGIELTFTEQVTILLVAMLTSKGASGVTGAGFVTLAGTLAAVNPALVPGMAIVFSIDKFMSEVRALTNITGNGVATVFVSWWEGELDHDRLQANLNRTIDPSDVETAITTG.

Transmembrane regions (helical) follow at residues 24-44 (VLYV…WVSP), 62-82 (LIKM…IAHI), 105-125 (FALI…GLAA), 163-183 (GDIL…MALG), 201-221 (FGVI…AMAF), 237-257 (LVAL…GLIA), 322-342 (IYMT…LTFT), and 370-390 (AGTL…VFSI).

The protein belongs to the dicarboxylate/amino acid:cation symporter (DAACS) (TC 2.A.23) family.

The protein resides in the cell inner membrane. Responsible for the transport of dicarboxylates such as succinate, fumarate, and malate from the periplasm across the membrane. In Rhodopseudomonas palustris (strain BisB5), this protein is C4-dicarboxylate transport protein.